Reading from the N-terminus, the 401-residue chain is Tyrosine--tRNA ligase (401 aa).

Residues 43-52 (PTAPDLHLGH) carry the 'HIGH' region motif. The 'KMSKS' region signature appears at 227-231 (KMSKS). Lys-230 lines the ATP pocket. The region spanning 338–399 (MAIGNVLKEA…GKRRFAKINL (62 aa)) is the S4 RNA-binding domain.

It belongs to the class-I aminoacyl-tRNA synthetase family. TyrS type 2 subfamily. In terms of assembly, homodimer.

It is found in the cytoplasm. The enzyme catalyses tRNA(Tyr) + L-tyrosine + ATP = L-tyrosyl-tRNA(Tyr) + AMP + diphosphate + H(+). Catalyzes the attachment of tyrosine to tRNA(Tyr) in a two-step reaction: tyrosine is first activated by ATP to form Tyr-AMP and then transferred to the acceptor end of tRNA(Tyr). The sequence is that of Tyrosine--tRNA ligase from Idiomarina loihiensis (strain ATCC BAA-735 / DSM 15497 / L2-TR).